We begin with the raw amino-acid sequence, 281 residues long: Shikimate dehydrogenase (NADP(+)) (281 aa).

Residues 19–21 and Thr66 each bind shikimate; that span reads SFS. Lys70 serves as the catalytic Proton acceptor. Positions 91 and 104 each coordinate shikimate. NADP(+)-binding positions include 127 to 131 and Ile223; that span reads GAGGA. Shikimate is bound at residue Tyr225. Gly246 is a binding site for NADP(+).

Belongs to the shikimate dehydrogenase family. As to quaternary structure, homodimer.

It catalyses the reaction shikimate + NADP(+) = 3-dehydroshikimate + NADPH + H(+). Its pathway is metabolic intermediate biosynthesis; chorismate biosynthesis; chorismate from D-erythrose 4-phosphate and phosphoenolpyruvate: step 4/7. Involved in the biosynthesis of the chorismate, which leads to the biosynthesis of aromatic amino acids. Catalyzes the reversible NADPH linked reduction of 3-dehydroshikimate (DHSA) to yield shikimate (SA). This chain is Shikimate dehydrogenase (NADP(+)), found in Methanobrevibacter smithii (strain ATCC 35061 / DSM 861 / OCM 144 / PS).